A 473-amino-acid polypeptide reads, in one-letter code: PTS system trehalose-specific EIIBC component (473 aa).

The PTS EIIB type-1 domain occupies 1-89 (MMSKINQTDI…IASTGQAQVD (89 aa)). Residues 1–110 (MMSKINQTDI…MKWHEQLISH (110 aa)) lie on the Cytoplasmic side of the membrane. Cysteine 29 (phosphocysteine intermediate; for EIIB activity) is an active-site residue. Cysteine 29 is modified (phosphocysteine; by EIIA). Residues 109 to 473 (SHFAVIFFPL…KYRLGTLDIV (365 aa)) enclose the PTS EIIC type-1 domain. The helical transmembrane segment at 111–131 (FAVIFFPLLPALISGGLILGF) threads the bilayer. Topologically, residues 132 to 158 (RNVIGDLPMSNGQTLAQMYPSLQTIYD) are periplasmic. The helical transmembrane segment at 159–179 (FLWLIGEAIFFYLPVGICWSA) threads the bilayer. The Cytoplasmic segment spans residues 180–187 (VKKMGGTP). The chain crosses the membrane as a helical span at residues 188-208 (ILGIVLGVTLVSPQLMNAYLL). Residues 209-225 (GQQLPEVWDFGMFSIAK) lie on the Periplasmic side of the membrane. Residues 226 to 246 (VGYQAQVIPALLAGLALGVIE) form a helical membrane-spanning segment. The Cytoplasmic segment spans residues 247-258 (TRLKRIVPDYLY). A helical transmembrane segment spans residues 259-279 (LVVVPVCSLILAVFLAHALIG). The Periplasmic segment spans residues 280–300 (PFGRMIGDGVAFAVRHLMTGS). The chain crosses the membrane as a helical span at residues 301–321 (FAPIGAALFGFLYAPLVITGV). The Cytoplasmic segment spans residues 322-340 (HQTTLAIDLQMIQSMGGTP). Residues 341–361 (VWPLIALSNIAQGSAVIGIII) traverse the membrane as a helical segment. The Periplasmic portion of the chain corresponds to 362–370 (SSRKHNERE). The helical transmembrane segment at 371–391 (ISVPAAISAWLGVTEPAMYGI) threads the bilayer. The Cytoplasmic segment spans residues 392–398 (NLKYRFP). The helical transmembrane segment at 399–419 (MLCAMIGSGLAGLLCGLNGVM) threads the bilayer. Residues 420 to 440 (ANGIGVGGLPGILSIQPSYWQ) lie on the Periplasmic side of the membrane. The chain crosses the membrane as a helical span at residues 441–461 (VFALAMAIAIIIPIVLTSFIY). The Cytoplasmic portion of the chain corresponds to 462–473 (QRKYRLGTLDIV).

It is found in the cell inner membrane. The enzyme catalyses alpha,alpha-trehalose(out) + N(pros)-phospho-L-histidyl-[protein] = alpha,alpha-trehalose 6-phosphate(in) + L-histidyl-[protein]. Its function is as follows. The phosphoenolpyruvate-dependent sugar phosphotransferase system (sugar PTS), a major carbohydrate active transport system, catalyzes the phosphorylation of incoming sugar substrates concomitantly with their translocation across the cell membrane. This system is involved in trehalose transport at low osmolarity. The sequence is that of PTS system trehalose-specific EIIBC component (treB) from Escherichia coli (strain K12).